Reading from the N-terminus, the 337-residue chain is Prenyltransferase terC (337 aa).

Mg(2+)-binding residues include aspartate 111 and aspartate 115.

Belongs to the FPP/GGPP synthase family. Requires Mg(2+) as cofactor.

It functions in the pathway secondary metabolite biosynthesis. In terms of biological role, prenyltransferase; part of the gene cluster that mediates the biosynthesis of terpendoles, indole-diterpene (IDT) mycotoxins including terpendole I, terpendole K, terpendole C, as well as the kinesin Eg5 inhibitor terpendole E. Terpendoles biosynthesis begins with the synthesis of geranylgeranyl diphosphate (GGPP) by a yet unidentified GGPP synthase. Condensation of indole-3-glycerol phosphate with GGPP by the prenyltransferase terC then forms 3-geranylgeranylindole (3-GGI), followed by epoxidation and cyclization of this intermediate (by the FAD-dependent monooxygeanse terM and the terpene cyclase terB) to form paspaline. The cytochrome monooxygenase terQ then hydroxylates paspalline at C-11 to yield terpendole E. The cytochrome monooxygenase terP converts terpendole E to 13-desoxyterpendole I, and terQ converts 13-desoxyterpendole I into terpendole I. TerF and terK are required for conversion of terpendole I to terpendole C which is further converted to terpendole K. The chain is Prenyltransferase terC from Tolypocladium album (Soil fungus).